Reading from the N-terminus, the 457-residue chain is Argininosuccinate lyase (457 aa).

This sequence belongs to the lyase 1 family. Argininosuccinate lyase subfamily.

Its subcellular location is the cytoplasm. It carries out the reaction 2-(N(omega)-L-arginino)succinate = fumarate + L-arginine. It participates in amino-acid biosynthesis; L-arginine biosynthesis; L-arginine from L-ornithine and carbamoyl phosphate: step 3/3. The sequence is that of Argininosuccinate lyase from Haemophilus influenzae (strain PittGG).